The sequence spans 165 residues: Small ribosomal subunit protein uS17c (165 aa).

The transit peptide at Met1 to Ala57 directs the protein to the chloroplast. Positions Ala128–Val165 are disordered.

Component of the chloroplast small ribosomal subunit (SSU). Mature 70S chloroplast ribosomes of higher plants consist of a small (30S) and a large (50S) subunit. The 30S small subunit contains 1 molecule of ribosomal RNA (16S rRNA) and 24 different proteins. The 50S large subunit contains 3 rRNA molecules (23S, 5S and 4.5S rRNA) and 33 different proteins.

It is found in the plastid. It localises to the chloroplast. Its function is as follows. Component of the chloroplast ribosome (chloro-ribosome), a dedicated translation machinery responsible for the synthesis of chloroplast genome-encoded proteins, including proteins of the transcription and translation machinery and components of the photosynthetic apparatus. The chain is Small ribosomal subunit protein uS17c (RPS17) from Spinacia oleracea (Spinach).